Consider the following 448-residue polypeptide: Phosphoglucosamine mutase (448 aa).

The active-site Phosphoserine intermediate is the Ser100. Mg(2+) is bound by residues Ser100, Asp240, Asp242, and Asp244. Ser100 bears the Phosphoserine mark.

The protein belongs to the phosphohexose mutase family. Mg(2+) serves as cofactor. Post-translationally, activated by phosphorylation.

The catalysed reaction is alpha-D-glucosamine 1-phosphate = D-glucosamine 6-phosphate. Catalyzes the conversion of glucosamine-6-phosphate to glucosamine-1-phosphate. This chain is Phosphoglucosamine mutase, found in Bacillus cereus (strain ATCC 10987 / NRS 248).